The primary structure comprises 262 residues: Phosphoribosylformylglycinamidine synthase subunit PurQ (262 aa).

In terms of domain architecture, Glutamine amidotransferase type-1 spans 2–238 (RIAVIQFPGT…FAWQLPRKHP (237 aa)). The active-site Nucleophile is Cys87. Catalysis depends on residues His223 and Glu225.

In terms of assembly, part of the FGAM synthase complex composed of 1 PurL, 1 PurQ and 2 PurS subunits.

It localises to the cytoplasm. It carries out the reaction N(2)-formyl-N(1)-(5-phospho-beta-D-ribosyl)glycinamide + L-glutamine + ATP + H2O = 2-formamido-N(1)-(5-O-phospho-beta-D-ribosyl)acetamidine + L-glutamate + ADP + phosphate + H(+). It catalyses the reaction L-glutamine + H2O = L-glutamate + NH4(+). It participates in purine metabolism; IMP biosynthesis via de novo pathway; 5-amino-1-(5-phospho-D-ribosyl)imidazole from N(2)-formyl-N(1)-(5-phospho-D-ribosyl)glycinamide: step 1/2. In terms of biological role, part of the phosphoribosylformylglycinamidine synthase complex involved in the purines biosynthetic pathway. Catalyzes the ATP-dependent conversion of formylglycinamide ribonucleotide (FGAR) and glutamine to yield formylglycinamidine ribonucleotide (FGAM) and glutamate. The FGAM synthase complex is composed of three subunits. PurQ produces an ammonia molecule by converting glutamine to glutamate. PurL transfers the ammonia molecule to FGAR to form FGAM in an ATP-dependent manner. PurS interacts with PurQ and PurL and is thought to assist in the transfer of the ammonia molecule from PurQ to PurL. The chain is Phosphoribosylformylglycinamidine synthase subunit PurQ from Methanothrix thermoacetophila (strain DSM 6194 / JCM 14653 / NBRC 101360 / PT) (Methanosaeta thermophila).